Here is a 219-residue protein sequence, read N- to C-terminus: Vesicle-associated membrane protein 711 (219 aa).

Alanine 2 is subject to N-acetylalanine. At 2 to 189 the chain is on the cytoplasmic side; it reads AILYALVARG…RSNVWWRNCK (188 aa). The region spanning 7–111 is the Longin domain; that stretch reads LVARGTVVLS…AMNEEFSRVL (105 aa). The region spanning 126–186 is the v-SNARE coiled-coil homology domain; it reads RINRIKGEMN…RRFRSNVWWR (61 aa). A helical; Anchor for type IV membrane protein membrane pass occupies residues 190–210; the sequence is LTVLLILLLLVIIYIAVAFLC. The Vesicular portion of the chain corresponds to 211 to 219; sequence HGPTLPSCI.

The protein belongs to the synaptobrevin family. Expressed in flowers, leaves, stems and roots.

The protein localises to the vacuole membrane. The protein resides in the prevacuolar compartment membrane. Its function is as follows. Involved in the targeting and/or fusion of transport vesicles to their target membrane. This Arabidopsis thaliana (Mouse-ear cress) protein is Vesicle-associated membrane protein 711.